Consider the following 298-residue polypeptide: GTPase Era (298 aa).

The Era-type G domain maps to 3-170; that stretch reads KSGFVAILGR…VQLLKDNLEE (168 aa). The G1 stretch occupies residues 11–18; it reads GRPNVGKS. GTP is bound at residue 11 to 18; that stretch reads GRPNVGKS. A G2 region spans residues 37–41; it reads QSTRN. The tract at residues 58–61 is G3; that stretch reads DTPG. GTP contacts are provided by residues 58–62 and 120–123; these read DTPGI and NKID. The G4 stretch occupies residues 120–123; the sequence is NKID. A G5 region spans residues 149–151; that stretch reads ISA. Positions 201-279 constitute a KH type-2 domain; it reads TQQEVPHSVA…YLETWVKVKK (79 aa).

It belongs to the TRAFAC class TrmE-Era-EngA-EngB-Septin-like GTPase superfamily. Era GTPase family. In terms of assembly, monomer.

Its subcellular location is the cytoplasm. It localises to the cell membrane. Its function is as follows. An essential GTPase that binds both GDP and GTP, with rapid nucleotide exchange. Plays a role in 16S rRNA processing and 30S ribosomal subunit biogenesis and possibly also in cell cycle regulation and energy metabolism. In Streptococcus equi subsp. zooepidemicus (strain H70), this protein is GTPase Era.